Consider the following 169-residue polypeptide: Ureidoglycolate lyase (169 aa).

The protein belongs to the ureidoglycolate lyase family. As to quaternary structure, homodimer. It depends on Ni(2+) as a cofactor.

It catalyses the reaction (S)-ureidoglycolate = urea + glyoxylate. It participates in nitrogen metabolism; (S)-allantoin degradation. Its function is as follows. Catalyzes the catabolism of the allantoin degradation intermediate (S)-ureidoglycolate, generating urea and glyoxylate. Involved in the utilization of allantoin as nitrogen source. The sequence is that of Ureidoglycolate lyase from Pseudomonas paraeruginosa (strain DSM 24068 / PA7) (Pseudomonas aeruginosa (strain PA7)).